Here is a 268-residue protein sequence, read N- to C-terminus: tRNA pseudouridine synthase A (268 aa).

Residue Asp52 is the Nucleophile of the active site. Position 113 (Tyr113) interacts with substrate.

The protein belongs to the tRNA pseudouridine synthase TruA family. As to quaternary structure, homodimer.

The catalysed reaction is uridine(38/39/40) in tRNA = pseudouridine(38/39/40) in tRNA. In terms of biological role, formation of pseudouridine at positions 38, 39 and 40 in the anticodon stem and loop of transfer RNAs. This chain is tRNA pseudouridine synthase A, found in Chlamydia felis (strain Fe/C-56) (Chlamydophila felis).